The following is a 105-amino-acid chain: Protein RALF-like 21 (105 aa).

A signal peptide spans 1–30; that stretch reads MSNMKITNRFMLVATFIACVFISSMNMTVG. 2 disulfides stabilise this stretch: Cys-44–Cys-53 and Cys-67–Cys-73.

This sequence belongs to the plant rapid alkalinization factor (RALF) family. In terms of tissue distribution, expressed in seeds and rosettes.

The protein localises to the secreted. Its function is as follows. Cell signaling peptide that may regulate plant stress, growth, and development. Mediates a rapid alkalinization of extracellular space by mediating a transient increase in the cytoplasmic Ca(2+) concentration leading to a calcium-dependent signaling events through a cell surface receptor and a concomitant activation of some intracellular mitogen-activated protein kinases. This is Protein RALF-like 21 (RALFL21) from Arabidopsis thaliana (Mouse-ear cress).